We begin with the raw amino-acid sequence, 542 residues long: CTP synthase (542 aa).

The segment at 1-265 (MARYVFITGG…DSEVLAAFGI (265 aa)) is amidoligase domain. Residue S13 coordinates CTP. S13 is a binding site for UTP. Residue 14-19 (SLGKGI) coordinates ATP. L-glutamine is bound at residue Y54. D71 lines the ATP pocket. 2 residues coordinate Mg(2+): D71 and E139. Residues 146–148 (DIE), 186–191 (KTKPTQ), and K222 contribute to the CTP site. UTP-binding positions include 186 to 191 (KTKPTQ) and K222. The Glutamine amidotransferase type-1 domain maps to 291–541 (TIAIVGKYTG…IAAAVEQSRL (251 aa)). G353 is a binding site for L-glutamine. Residue C380 is the Nucleophile; for glutamine hydrolysis of the active site. Residues 381-384 (FGMQ), E404, and R469 each bind L-glutamine. Residues H514 and E516 contribute to the active site.

It belongs to the CTP synthase family. In terms of assembly, homotetramer.

It catalyses the reaction UTP + L-glutamine + ATP + H2O = CTP + L-glutamate + ADP + phosphate + 2 H(+). The enzyme catalyses L-glutamine + H2O = L-glutamate + NH4(+). The catalysed reaction is UTP + NH4(+) + ATP = CTP + ADP + phosphate + 2 H(+). It functions in the pathway pyrimidine metabolism; CTP biosynthesis via de novo pathway; CTP from UDP: step 2/2. With respect to regulation, allosterically activated by GTP, when glutamine is the substrate; GTP has no effect on the reaction when ammonia is the substrate. The allosteric effector GTP functions by stabilizing the protein conformation that binds the tetrahedral intermediate(s) formed during glutamine hydrolysis. Inhibited by the product CTP, via allosteric rather than competitive inhibition. In terms of biological role, catalyzes the ATP-dependent amination of UTP to CTP with either L-glutamine or ammonia as the source of nitrogen. Regulates intracellular CTP levels through interactions with the four ribonucleotide triphosphates. The polypeptide is CTP synthase (Chelativorans sp. (strain BNC1)).